A 162-amino-acid polypeptide reads, in one-letter code: NADH-quinone oxidoreductase subunit I (162 aa).

2 consecutive 4Fe-4S ferredoxin-type domains span residues 53 to 83 and 93 to 122; these read LRRY…IDSA and TRYD…ETHI. Positions 63, 66, 69, 73, 102, 105, 108, and 112 each coordinate [4Fe-4S] cluster.

It belongs to the complex I 23 kDa subunit family. As to quaternary structure, NDH-1 is composed of 14 different subunits. Subunits NuoA, H, J, K, L, M, N constitute the membrane sector of the complex. Requires [4Fe-4S] cluster as cofactor.

It is found in the cell inner membrane. The catalysed reaction is a quinone + NADH + 5 H(+)(in) = a quinol + NAD(+) + 4 H(+)(out). NDH-1 shuttles electrons from NADH, via FMN and iron-sulfur (Fe-S) centers, to quinones in the respiratory chain. The immediate electron acceptor for the enzyme in this species is believed to be ubiquinone. Couples the redox reaction to proton translocation (for every two electrons transferred, four hydrogen ions are translocated across the cytoplasmic membrane), and thus conserves the redox energy in a proton gradient. In Xanthomonas oryzae pv. oryzae (strain MAFF 311018), this protein is NADH-quinone oxidoreductase subunit I.